Reading from the N-terminus, the 368-residue chain is Glycoprotein UL18 (368 aa).

Residues Met1–Val18 form the signal peptide. An alpha-1-like region spans residues Gly19 to Ser114. N-linked (GlcNAc...) asparagine; by host glycosylation is found at Asn56, Asn66, Asn74, Asn95, Asn123, Asn127, Asn150, Asn167, Asn177, Asn193, Asn240, Asn282, and Asn291. An alpha-2-like region spans residues Val115 to Val208. Residues Thr209–Pro303 form an alpha-3-like region. Residues Tyr321–Phe342 form a helical membrane-spanning segment.

In terms of assembly, interacts with host LILRB1.

The protein localises to the host membrane. Its function is as follows. Plays a role in the protection against host NK cell cytotoxicity by interacting with and modulating the activity of the host inhibitory leukocyte Ig-like receptor 1/LILRB1, which is expressed on monocytes, dendritic cells, as well as subsets of T and NK cells. UL18 exerts an inhibitory effect on LIR-1+ NK cells, while it stimulates LIR-1- NK cell. These modulations prevent lysis of the infected cells by NK cells. The polypeptide is Glycoprotein UL18 (H301) (Homo sapiens (Human)).